Here is a 311-residue protein sequence, read N- to C-terminus: Formimidoylglutamase (311 aa).

Mn(2+) is bound by residues His122, Asp151, His153, Asp155, Cys242, and Asp244.

The protein belongs to the arginase family. It depends on Mn(2+) as a cofactor.

The catalysed reaction is N-formimidoyl-L-glutamate + H2O = formamide + L-glutamate. It participates in amino-acid degradation; L-histidine degradation into L-glutamate; L-glutamate from N-formimidoyl-L-glutamate (hydrolase route): step 1/1. In terms of biological role, catalyzes the conversion of N-formimidoyl-L-glutamate to L-glutamate and formamide. This chain is Formimidoylglutamase, found in Pseudomonas paraeruginosa (strain DSM 24068 / PA7) (Pseudomonas aeruginosa (strain PA7)).